The chain runs to 1059 residues: Protein cappuccino (1059 aa).

Polar residues-rich tracts occupy residues 62 to 80 (AAVTQTPPGVTSSTPNESG) and 90 to 123 (ATTSSPSLETQSTVIISFKSSQTPVQSQTNSAAS). Disordered regions lie at residues 62–146 (AAVT…GTPT) and 448–647 (QTES…TAPP). The segment covering 133-142 (LPLPPPPPGF) has biased composition (pro residues). Residues 468 to 481 (SDNESAKEDGEKPH) are compositionally biased toward basic and acidic residues. Residues 480 to 560 (PHAVAPPPPP…PPPPMSASPS (81 aa)) form the FH1 domain. Positions 483–541 (VAPPPPPPPPPLHAFVAPPPPPPPPPPPPPPLANYGAPPPPPPPPPGSGSAPPPPPPAP) are enriched in pro residues. Residues 585–1032 (RKSAVNPPKP…KKSKQAQIES (448 aa)) enclose the FH2 domain. Positions 620-629 (TDSTENSGSS) are enriched in polar residues. An important for interaction with spir region spans residues 1049–1059 (KERMLMRRSKN).

The protein belongs to the formin homology family. Cappuccino subfamily. As to quaternary structure, interacts with wash. Interacts with spir.

The protein resides in the cytoplasm. It is found in the cytoskeleton. The protein localises to the cytosol. It localises to the membrane. Its subcellular location is the cytoplasmic vesicle membrane. In terms of biological role, acts as an actin nucleation factor and promotes assembly of actin filaments together with spir. May play a role in intracellular vesicle transport along actin fibers, providing a novel link between actin cytoskeleton dynamics and intracellular transport. This Drosophila melanogaster (Fruit fly) protein is Protein cappuccino (capu).